Reading from the N-terminus, the 167-residue chain is Small ribosomal subunit protein uS5 (167 aa).

In terms of domain architecture, S5 DRBM spans 11–74 (LQEKLIAVNR…EKARRAMINV (64 aa)).

Belongs to the universal ribosomal protein uS5 family. In terms of assembly, part of the 30S ribosomal subunit. Contacts proteins S4 and S8.

In terms of biological role, with S4 and S12 plays an important role in translational accuracy. Located at the back of the 30S subunit body where it stabilizes the conformation of the head with respect to the body. In Yersinia enterocolitica serotype O:8 / biotype 1B (strain NCTC 13174 / 8081), this protein is Small ribosomal subunit protein uS5.